Here is a 365-residue protein sequence, read N- to C-terminus: uncharacterized protein (365 aa).

Basic and acidic residues-rich tracts occupy residues 1–27 (MDNVQEHDPDTQEHNNETQNHKQEDHS) and 315–339 (AKDDEQYAKRLAKEEEERGKKETPK). Disordered stretches follow at residues 1–31 (MDNVQEHDPDTQEHNNETQNHKQEDHSNSYQ) and 308–365 (KEEK…CLIS). A compositionally biased stretch (polar residues) spans 340 to 353 (KASNTPRRNKSNTQ).

To yeast YGL082w. As to quaternary structure, interacts with sad1.

Its subcellular location is the cytoplasm. This is an uncharacterized protein from Schizosaccharomyces pombe (strain 972 / ATCC 24843) (Fission yeast).